The following is a 462-amino-acid chain: Cysteine--tRNA ligase (462 aa).

Cys-24 lines the Zn(2+) pocket. The 'HIGH' region motif lies at 26-36; sequence PTVYDDAHLGH. 3 residues coordinate Zn(2+): Cys-199, His-224, and Glu-228. The short motif at 256 to 260 is the 'KMSKS' region element; that stretch reads KMSKS. Lys-259 serves as a coordination point for ATP.

Belongs to the class-I aminoacyl-tRNA synthetase family. Monomer. Zn(2+) serves as cofactor.

It localises to the cytoplasm. It catalyses the reaction tRNA(Cys) + L-cysteine + ATP = L-cysteinyl-tRNA(Cys) + AMP + diphosphate. This is Cysteine--tRNA ligase (cysS) from Campylobacter jejuni subsp. jejuni serotype O:2 (strain ATCC 700819 / NCTC 11168).